Reading from the N-terminus, the 121-residue chain is uncharacterized protein (121 aa).

Residues 100 to 121 form a disordered region; it reads KSFSNTKDGKKNDDDNNSSSKS.

This is an uncharacterized protein from Mycoplasma pneumoniae (strain ATCC 29342 / M129 / Subtype 1) (Mycoplasmoides pneumoniae).